A 608-amino-acid chain; its full sequence is Aspartate--tRNA(Asp/Asn) ligase (608 aa).

Glu175 contacts L-aspartate. The aspartate stretch occupies residues 199–202; the sequence is QLFK. Arg221 serves as a coordination point for L-aspartate. Residues 221-223 and Gln230 contribute to the ATP site; that span reads RDE. His453 serves as a coordination point for L-aspartate. Glu487 contacts ATP. An L-aspartate-binding site is contributed by Arg494. 539–542 provides a ligand contact to ATP; sequence GWDR. The disordered stretch occupies residues 566–608; that stretch reads IDPLTDAPAAITPQQRKEAGIDAKPKPKAEAQAEAQAEESAEK. Over residues 580 to 596 the composition is skewed to basic and acidic residues; sequence QRKEAGIDAKPKPKAEA.

This sequence belongs to the class-II aminoacyl-tRNA synthetase family. Type 1 subfamily. Homodimer.

The protein localises to the cytoplasm. The enzyme catalyses tRNA(Asx) + L-aspartate + ATP = L-aspartyl-tRNA(Asx) + AMP + diphosphate. In terms of biological role, aspartyl-tRNA synthetase with relaxed tRNA specificity since it is able to aspartylate not only its cognate tRNA(Asp) but also tRNA(Asn). Reaction proceeds in two steps: L-aspartate is first activated by ATP to form Asp-AMP and then transferred to the acceptor end of tRNA(Asp/Asn). This Corynebacterium glutamicum (strain ATCC 13032 / DSM 20300 / JCM 1318 / BCRC 11384 / CCUG 27702 / LMG 3730 / NBRC 12168 / NCIMB 10025 / NRRL B-2784 / 534) protein is Aspartate--tRNA(Asp/Asn) ligase.